We begin with the raw amino-acid sequence, 399 residues long: O-glucosyltransferase rumi homolog (399 aa).

A signal peptide spans 1–18; it reads MHFIIGIVICLSLSVIQS. N-linked (GlcNAc...) asparagine glycans are attached at residues Asn19 and Asn67. 4 cysteine pairs are disulfide-bonded: Cys66–Cys73, Cys71–Cys373, Cys118–Cys124, and Cys277–Cys300. The active-site Proton donor/acceptor is Asp149. The interaction with the consensus sequence C-X-S-X-[PA]-C in peptide substrates stretch occupies residues 189–194; it reads AIALYP. UDP-alpha-D-glucose-binding positions include 224 to 228, Arg232, 271 to 273, and 289 to 293; these read RGSRT, VTL, and AASFR.

It belongs to the glycosyltransferase 90 family.

Its subcellular location is the endoplasmic reticulum lumen. It is found in the secreted. It participates in protein modification; protein glycosylation. In terms of biological role, protein O-glucosyltransferase. Catalyzes the reaction that attaches glucose through an O-glycosidic linkage to a conserved serine residue found in the consensus sequence C-X-S-X-[PA]-C in epidermal growth factor-like repeats. Regulates Notch signaling by glucosylating Notch in the ER, glucosylation is required for the correct folding and cleavage of Notch. The sequence is that of O-glucosyltransferase rumi homolog from Anopheles gambiae (African malaria mosquito).